The sequence spans 570 residues: MRLSQLLVPTLREIPAEAEIPSHILMLKAALMRKLASGVYIYLPLGQRVLRKVEQIVREEMDRAGSQEVLMSALIPAELLKESGRWDVFGPEMFKLKDRNERDFCLGPTHEEVFTDLIRNEVKSYRQLPLILYQIQTKFRDERRPRFGVMRSREFIMKDAYSFDVDWEGLDKSFNKMYEAYCRIFDRCGLKYLVVEADSGAMGGKDSKEFMVISSIGEAVIAYCDNCGYAANEEKAECLINQEIVEEMLPKEEVYTPNVRTIEELVNFLGITPNKFVKTLIYKAKDNVVAALVRGDRDLNETKLLNILGIREEELELADASIVEKVTGAKVGFAGPIGLKGEVMIIVDNEIPQMRNFIVGANETDYHIKNVNYGRDFKADVVADIKNVIEGDKCPRCGSPLKIDRGIEVGHIFKLGTKYSDALGAKYVDEEGNEKPIIMGCYGIGINRTVAAIIEQHHDEKGIIWPMSVAPYHVIIVPVNVSNEAQNRVAEDIYAALQKEGIEVLIDDRDLRAGVKFNDADLLGIPIRITVGKKVDDGIVEIKLRENEEAEEVKISDVVEKVKNIIKEKM.

It belongs to the class-II aminoacyl-tRNA synthetase family. ProS type 1 subfamily. As to quaternary structure, homodimer.

It localises to the cytoplasm. The enzyme catalyses tRNA(Pro) + L-proline + ATP = L-prolyl-tRNA(Pro) + AMP + diphosphate. In terms of biological role, catalyzes the attachment of proline to tRNA(Pro) in a two-step reaction: proline is first activated by ATP to form Pro-AMP and then transferred to the acceptor end of tRNA(Pro). As ProRS can inadvertently accommodate and process non-cognate amino acids such as alanine and cysteine, to avoid such errors it has two additional distinct editing activities against alanine. One activity is designated as 'pretransfer' editing and involves the tRNA(Pro)-independent hydrolysis of activated Ala-AMP. The other activity is designated 'posttransfer' editing and involves deacylation of mischarged Ala-tRNA(Pro). The misacylated Cys-tRNA(Pro) is not edited by ProRS. The protein is Proline--tRNA ligase of Thermoanaerobacter sp. (strain X514).